The sequence spans 405 residues: Envelope glycoprotein M (405 aa).

Topologically, residues M1–T17 are intravirion. A helical transmembrane segment spans residues L18 to P38. Residues N39–E76 lie on the Virion surface side of the membrane. Residues M77–C97 form a helical membrane-spanning segment. The Intravirion segment spans residues G98–A121. The helical transmembrane segment at V122–I142 threads the bilayer. At Q143 to H149 the chain is on the virion surface side. A helical transmembrane segment spans residues V150–A170. The Intravirion segment spans residues C171–T192. A helical membrane pass occupies residues F193 to L215. The Virion surface portion of the chain corresponds to E216–N245. Residues L246–L266 form a helical membrane-spanning segment. Residue R267 is a topological domain, intravirion. Residues H268–V288 traverse the membrane as a helical segment. Over R289–L299 the chain is Virion surface. The helical transmembrane segment at H300 to I320 threads the bilayer. Topologically, residues R321–P405 are intravirion. Residues L346–P405 are disordered. The segment covering Q386–T397 has biased composition (polar residues).

It belongs to the herpesviridae glycoprotein M family. In terms of assembly, interacts (via N-terminus) with gN (via N-terminus). The gM-gN heterodimer forms the gCII complex.

It localises to the virion membrane. It is found in the host Golgi apparatus. The protein localises to the host trans-Golgi network. The protein resides in the host endosome membrane. Its subcellular location is the host nucleus inner membrane. In terms of biological role, envelope glycoprotein important for virion assembly and egress. Plays a role in the correct incorporation of gH-gL into virion membrane. Directs the glycoprotein N (gN) to the host trans-Golgi network. The chain is Envelope glycoprotein M from Homo sapiens (Human).